A 265-amino-acid chain; its full sequence is Mlc titration factor A (265 aa).

4 residues coordinate Zn(2+): His-111, His-148, His-152, and Glu-211.

This sequence belongs to the MtfA family. In terms of assembly, interacts with Mlc. It depends on Zn(2+) as a cofactor.

Its subcellular location is the cytoplasm. Its function is as follows. Involved in the modulation of the activity of the glucose-phosphotransferase system (glucose-PTS). Interacts with the transcriptional repressor Mlc, preventing its interaction with DNA and leading to the modulation of expression of genes regulated by Mlc, including ptsG, which encodes the PTS system glucose-specific EIICB component. In terms of biological role, shows zinc-dependent metallopeptidase activity. This Escherichia coli (strain UTI89 / UPEC) protein is Mlc titration factor A.